A 699-amino-acid chain; its full sequence is Elongation factor G (699 aa).

Residues 8-283 (EHIRNIGICA…AVVDFLPSPI (276 aa)) enclose the tr-type G domain. Residues 17–24 (AHIDAGKT), 81–85 (DTPGH), and 135–138 (NKMD) contribute to the GTP site.

It belongs to the TRAFAC class translation factor GTPase superfamily. Classic translation factor GTPase family. EF-G/EF-2 subfamily.

The protein localises to the cytoplasm. Catalyzes the GTP-dependent ribosomal translocation step during translation elongation. During this step, the ribosome changes from the pre-translocational (PRE) to the post-translocational (POST) state as the newly formed A-site-bound peptidyl-tRNA and P-site-bound deacylated tRNA move to the P and E sites, respectively. Catalyzes the coordinated movement of the two tRNA molecules, the mRNA and conformational changes in the ribosome. The chain is Elongation factor G from Rickettsia helvetica.